Consider the following 194-residue polypeptide: Large ribosomal subunit protein eL15 (194 aa).

A disordered region spans residues 168 to 194 (RSRGLLNKGKGAEKVRPSIRAHQGKGK). Residues 184 to 194 (PSIRAHQGKGK) show a composition bias toward basic residues.

The protein belongs to the eukaryotic ribosomal protein eL15 family. As to quaternary structure, part of the 50S ribosomal subunit.

In Thermococcus kodakarensis (strain ATCC BAA-918 / JCM 12380 / KOD1) (Pyrococcus kodakaraensis (strain KOD1)), this protein is Large ribosomal subunit protein eL15.